The chain runs to 390 residues: ATP phosphoribosyltransferase regulatory subunit (390 aa).

Belongs to the class-II aminoacyl-tRNA synthetase family. HisZ subfamily. Heteromultimer composed of HisG and HisZ subunits.

The protein localises to the cytoplasm. It participates in amino-acid biosynthesis; L-histidine biosynthesis; L-histidine from 5-phospho-alpha-D-ribose 1-diphosphate: step 1/9. In terms of biological role, required for the first step of histidine biosynthesis. May allow the feedback regulation of ATP phosphoribosyltransferase activity by histidine. This is ATP phosphoribosyltransferase regulatory subunit from Nitrosomonas eutropha (strain DSM 101675 / C91 / Nm57).